A 306-amino-acid chain; its full sequence is Leucine-rich repeat-containing protein 59 (306 aa).

Methionine 1 carries the N-acetylmethionine modification. Threonine 2 carries the N-acetylthreonine; in Leucine-rich repeat-containing protein 59, N-terminally processed modification. Topologically, residues 2 to 244 (TKAGSKGGNL…KPPPRKHTRS (243 aa)) are cytoplasmic. LRR repeat units follow at residues 10–31 (NLRDKLDGNELDLSLSDLNEVP), 40–62 (KATVLDLSCNKLTTLPSDFCGLT), 63–84 (HLVKLDLSKNKLRQLPADFGRL), 86–107 (NLQHLDLLNNRLVTLPVSFAQL), and 109–128 (SLKWLDLKDNPLDPVLAKVA). Phosphoserine occurs at positions 23 and 25. Lysine 73 is modified (N6-succinyllysine). Lysine 135 carries the post-translational modification N6-acetyllysine. A coiled-coil region spans residues 152 to 216 (QADQERERQR…KAAKREQEKK (65 aa)). Basic and acidic residues predominate over residues 175–221 (AKQRAKEAQERELRKREKAEEKERRRKEYDALKAAKREQEKKPKKET). The tract at residues 175–241 (AKQRAKEAQE…RPRKPPPRKH (67 aa)) is disordered. The segment covering 229–241 (SSSRPRKPPPRKH) has biased composition (basic residues). A helical membrane pass occupies residues 245–265 (WAVLKLLLLLLLCVAGGLVAC). At 266-306 (RVTELQQQPLCTSVNTIYDNAVRGLRSHDILQWVLQTDSQQ) the chain is on the lumenal side.

Can form homodimers. Interacts with SGO1. Interacts with FGF1.

The protein localises to the microsome membrane. It is found in the endoplasmic reticulum membrane. It localises to the nucleus envelope. Its function is as follows. Required for nuclear import of FGF1, but not that of FGF2. Might regulate nuclear import of exogenous FGF1 by facilitating interaction with the nuclear import machinery and by transporting cytosolic FGF1 to, and possibly through, the nuclear pores. This chain is Leucine-rich repeat-containing protein 59 (LRRC59), found in Bos taurus (Bovine).